We begin with the raw amino-acid sequence, 629 residues long: tRNA uridine 5-carboxymethylaminomethyl modification enzyme MnmG (629 aa).

FAD is bound by residues 13 to 18 (GGGHAG), V125, and S180. 273 to 287 (GPRYCPSIEDKVMRF) provides a ligand contact to NAD(+). Position 370 (Q370) interacts with FAD.

The protein belongs to the MnmG family. Homodimer. Heterotetramer of two MnmE and two MnmG subunits. Requires FAD as cofactor.

Its subcellular location is the cytoplasm. Its function is as follows. NAD-binding protein involved in the addition of a carboxymethylaminomethyl (cmnm) group at the wobble position (U34) of certain tRNAs, forming tRNA-cmnm(5)s(2)U34. The sequence is that of tRNA uridine 5-carboxymethylaminomethyl modification enzyme MnmG from Citrobacter koseri (strain ATCC BAA-895 / CDC 4225-83 / SGSC4696).